A 110-amino-acid polypeptide reads, in one-letter code: Iron-sulfur cluster assembly protein CyaY (110 aa).

This sequence belongs to the frataxin family.

Its function is as follows. Involved in iron-sulfur (Fe-S) cluster assembly. May act as a regulator of Fe-S biogenesis. This Pseudomonas entomophila (strain L48) protein is Iron-sulfur cluster assembly protein CyaY.